The following is a 323-amino-acid chain: Transaldolase (323 aa).

Catalysis depends on K131, which acts as the Schiff-base intermediate with substrate.

It belongs to the transaldolase family. Type 1 subfamily. Homodimer.

The protein localises to the cytoplasm. It carries out the reaction D-sedoheptulose 7-phosphate + D-glyceraldehyde 3-phosphate = D-erythrose 4-phosphate + beta-D-fructose 6-phosphate. It functions in the pathway carbohydrate degradation; pentose phosphate pathway; D-glyceraldehyde 3-phosphate and beta-D-fructose 6-phosphate from D-ribose 5-phosphate and D-xylulose 5-phosphate (non-oxidative stage): step 2/3. Transaldolase is important for the balance of metabolites in the pentose-phosphate pathway. The protein is Transaldolase of Blochmanniella floridana.